Reading from the N-terminus, the 358-residue chain is Protein RecA 2 (358 aa).

69–76 (GPESSGKT) serves as a coordination point for ATP. The segment at 331 to 358 (GIGKSGAPSPRRRTSPRRPKVAARSAAV) is disordered. Positions 340–351 (PRRRTSPRRPKV) are enriched in basic residues.

This sequence belongs to the RecA family.

The protein localises to the cytoplasm. Functionally, can catalyze the hydrolysis of ATP in the presence of single-stranded DNA, the ATP-dependent uptake of single-stranded DNA by duplex DNA, and the ATP-dependent hybridization of homologous single-stranded DNAs. It interacts with LexA causing its activation and leading to its autocatalytic cleavage. The chain is Protein RecA 2 from Myxococcus xanthus.